A 685-amino-acid polypeptide reads, in one-letter code: UvrABC system protein B (685 aa).

The 159-residue stretch at 30-188 folds into the Helicase ATP-binding domain; sequence DGVLRGDRWQ…QELVSLHYIR (159 aa). An ATP-binding site is contributed by 43 to 50; the sequence is GVTGSGKT. Positions 96–119 match the Beta-hairpin motif; that stretch reads YYDFYQPEAYLPALDKYIAKDLRI. In terms of domain architecture, Helicase C-terminal spans 435 to 597; the sequence is QIDDLLAEIR…ITPRSIRKSL (163 aa). Residues 641–676 enclose the UVR domain; that stretch reads YAMVAELRLEMNEAAIQMEYEKAAYLRDEIARLMHG.

This sequence belongs to the UvrB family. As to quaternary structure, forms a heterotetramer with UvrA during the search for lesions. Interacts with UvrC in an incision complex.

The protein localises to the cytoplasm. Functionally, the UvrABC repair system catalyzes the recognition and processing of DNA lesions. A damage recognition complex composed of 2 UvrA and 2 UvrB subunits scans DNA for abnormalities. Upon binding of the UvrA(2)B(2) complex to a putative damaged site, the DNA wraps around one UvrB monomer. DNA wrap is dependent on ATP binding by UvrB and probably causes local melting of the DNA helix, facilitating insertion of UvrB beta-hairpin between the DNA strands. Then UvrB probes one DNA strand for the presence of a lesion. If a lesion is found the UvrA subunits dissociate and the UvrB-DNA preincision complex is formed. This complex is subsequently bound by UvrC and the second UvrB is released. If no lesion is found, the DNA wraps around the other UvrB subunit that will check the other stand for damage. The chain is UvrABC system protein B from Chlorobium phaeobacteroides (strain DSM 266 / SMG 266 / 2430).